A 232-amino-acid polypeptide reads, in one-letter code: uncharacterized protein (232 aa).

This is an uncharacterized protein from Acanthamoeba polyphaga (Amoeba).